Here is a 307-residue protein sequence, read N- to C-terminus: S-methyl-5'-thioadenosine phosphorylase (307 aa).

Phosphate-binding positions include Ser16, 59–60 (RH), and 92–93 (SA). Met198 serves as a coordination point for substrate. Ser199 is a phosphate binding site. A substrate-binding site is contributed by 222 to 224 (DYD).

This sequence belongs to the PNP/MTAP phosphorylase family. MTAP subfamily. Homotrimer.

The protein resides in the cytoplasm. It localises to the nucleus. It catalyses the reaction S-methyl-5'-thioadenosine + phosphate = 5-(methylsulfanyl)-alpha-D-ribose 1-phosphate + adenine. It functions in the pathway amino-acid biosynthesis; L-methionine biosynthesis via salvage pathway; S-methyl-5-thio-alpha-D-ribose 1-phosphate from S-methyl-5'-thioadenosine (phosphorylase route): step 1/1. Its function is as follows. Catalyzes the reversible phosphorylation of S-methyl-5'-thioadenosine (MTA) to adenine and 5-methylthioribose-1-phosphate. Involved in the breakdown of MTA, a major by-product of polyamine biosynthesis. Responsible for the first step in the methionine salvage pathway after MTA has been generated from S-adenosylmethionine. Has broad substrate specificity with 6-aminopurine nucleosides as preferred substrates. The protein is S-methyl-5'-thioadenosine phosphorylase of Schizosaccharomyces pombe (strain 972 / ATCC 24843) (Fission yeast).